The sequence spans 234 residues: DNA repair and recombination protein RadB (234 aa).

The protein belongs to the eukaryotic RecA-like protein family. RadB subfamily.

Its function is as follows. Involved in DNA repair and in homologous recombination. May regulate the cleavage reactions of the branch-structured DNA. Has a very weak ATPase activity that is not stimulated by DNA. Binds DNA but does not promote DNA strands exchange. The protein is DNA repair and recombination protein RadB of Methanobrevibacter smithii (strain ATCC 35061 / DSM 861 / OCM 144 / PS).